A 287-amino-acid chain; its full sequence is Ribonuclease Z (287 aa).

7 residues coordinate Zn(2+): H64, H66, D68, H69, H124, D191, and H250. The active-site Proton acceptor is D68.

Belongs to the RNase Z family. As to quaternary structure, homodimer. Zn(2+) serves as cofactor.

It carries out the reaction Endonucleolytic cleavage of RNA, removing extra 3' nucleotides from tRNA precursor, generating 3' termini of tRNAs. A 3'-hydroxy group is left at the tRNA terminus and a 5'-phosphoryl group is left at the trailer molecule.. Zinc phosphodiesterase, which displays some tRNA 3'-processing endonuclease activity. Probably involved in tRNA maturation, by removing a 3'-trailer from precursor tRNA. The sequence is that of Ribonuclease Z from Pyrobaculum aerophilum (strain ATCC 51768 / DSM 7523 / JCM 9630 / CIP 104966 / NBRC 100827 / IM2).